The primary structure comprises 267 residues: Undecaprenyl-diphosphatase (267 aa).

8 helical membrane-spanning segments follow: residues Met1–Ile21, Gln39–Phe59, Trp87–Val107, Ser113–Ala133, Thr144–Thr164, Phe189–Leu209, Leu219–Ile239, and Val244–Leu264.

Belongs to the UppP family.

Its subcellular location is the cell inner membrane. It carries out the reaction di-trans,octa-cis-undecaprenyl diphosphate + H2O = di-trans,octa-cis-undecaprenyl phosphate + phosphate + H(+). Its function is as follows. Catalyzes the dephosphorylation of undecaprenyl diphosphate (UPP). Confers resistance to bacitracin. The polypeptide is Undecaprenyl-diphosphatase (Psychromonas ingrahamii (strain DSM 17664 / CCUG 51855 / 37)).